Here is a 491-residue protein sequence, read N- to C-terminus: Cytochrome P450 81F2 (491 aa).

Residues 283-303 traverse the membrane as a helical segment; sequence VIIKGLMLSMMLAGTDTAAVT. Position 429 (cysteine 429) interacts with heme.

It belongs to the cytochrome P450 family. Heme is required as a cofactor.

It is found in the membrane. The protein operates within secondary metabolite biosynthesis. In terms of biological role, involved in indole glucosinolate biosynthesis. Catalyzes hydroxylation reactions of the glucosinolate indole ring. Converts indol-3-yl-methylglucosinolate (I3M) to 4-hydroxy-indol-3-yl-methylglucosinolate (4OH-I3M) and/or 1-hydroxy-indol-3-yl-methylglucosinolate (1OH-I3M) intermediates. These hydroxy intermediates are converted to 4-methoxy-indol-3-yl-methylglucosinolate (4MO-I3M) and 1-methoxy-indol-3-yl-methylglucosinolate (1MO-I3M) by indole glucosinolate methyltransferase 1 and 2 (IGMT1 and IGMT2). Contributes to defense against the green peach aphid (Myzus persicae), a generalist phloem-feeding herbivore. Required for the biosynthesis of antifungal indole glucosinolate metabolites. Required for the pathogen-induced accumulation of 4MO-I3M, which in turn is activated by the atypical BGLU26/PEN2 myrosinase. Required for the biosynthesis of Trp-derived antifungal compounds and non-host resistance to the necrotrophic fungal pathogen Plectosphaerella cucumerina. Required for resistance to the non-adapted fungal pathogen Colletotrichum gloeosporioides. This is Cytochrome P450 81F2 from Arabidopsis thaliana (Mouse-ear cress).